We begin with the raw amino-acid sequence, 176 residues long: Nucleoside triphosphate/diphosphate phosphatase (176 aa).

The active-site Proton donor is the Arg23. Mg(2+) is bound by residues Asn87, Asp103, Asp105, Asp107, Asp120, and Glu123.

This sequence belongs to the Ntdp family. Mg(2+) is required as a cofactor.

The catalysed reaction is a ribonucleoside 5'-triphosphate + H2O = a ribonucleoside 5'-diphosphate + phosphate + H(+). It carries out the reaction a ribonucleoside 5'-diphosphate + H2O = a ribonucleoside 5'-phosphate + phosphate + H(+). Has nucleoside phosphatase activity towards nucleoside triphosphates and nucleoside diphosphates. This chain is Nucleoside triphosphate/diphosphate phosphatase, found in Bacillus velezensis (strain DSM 23117 / BGSC 10A6 / LMG 26770 / FZB42) (Bacillus amyloliquefaciens subsp. plantarum).